Here is a 134-residue protein sequence, read N- to C-terminus: D-ribose pyranase (134 aa).

The active-site Proton donor is H20. Substrate contacts are provided by residues D28, H99, and Y123–N125.

The protein belongs to the RbsD / FucU family. RbsD subfamily. Homodecamer.

Its subcellular location is the cytoplasm. It catalyses the reaction beta-D-ribopyranose = beta-D-ribofuranose. It participates in carbohydrate metabolism; D-ribose degradation; D-ribose 5-phosphate from beta-D-ribopyranose: step 1/2. Functionally, catalyzes the interconversion of beta-pyran and beta-furan forms of D-ribose. The protein is D-ribose pyranase of Staphylococcus aureus (strain USA300).